The chain runs to 328 residues: Protein-glutamine deamidase Cif (328 aa).

The segment at 1–68 is disordered; sequence MLEHGVMKIP…TNRTGENPMI (68 aa). The span at 52 to 63 shows a compositional bias: polar residues; it reads RSSSISNTNRTG. Active-site residues include cysteine 156, histidine 211, and glutamine 231.

This sequence belongs to the Cif family.

It localises to the secreted. The protein resides in the host nucleus. The catalysed reaction is L-glutaminyl-[protein] + H2O = L-glutamyl-[protein] + NH4(+). Protein-glutamine deamidase effector that inhibits the host cell cycle and other key cellular processes such as the actin network and programmed-cell death. Acts by mediating the side chain deamidation of 'Gln-40' of host NEDD8, converting it to glutamate, thereby abolishing the activity of cullin-RING-based E3 ubiquitin-protein ligase complexes (CRL complexes). Inactivation of CRL complexes prevents ubiquitination and subsequent degradation of the cyclin-dependent kinase inhibitors CDKN1A/p21 and CDKN1B/p27, leading to G1 and G2 cell cycle arrests in host cells. Deamidation of 'Gln-40' of host NEDD8 also triggers macrophage-specific programmed cell death. Also able to catalyze deamidation of 'Gln-40' of host ubiquitin in vitro; however, NEDD8 constitutes the preferred substrate in vivo. Also regulates the host NF-kappa-B signaling via activation of MAPK/ERK cascade: activation of host MAPK/ERK cascade is independent of CRL complexes inhibition, suggesting that Cif has other host protein targets than NEDD8. This is Protein-glutamine deamidase Cif from Burkholderia pseudomallei (strain K96243).